The chain runs to 284 residues: 8-methylmenaquinol:fumarate reductase membrane anchor subunit (284 aa).

The MFR complex is composed of three subunits: a flavoprotein (SdhA), an iron-sulfur protein (SdhB), and one hydrophobic anchor protein (SdhE).

The protein resides in the periplasm. It localises to the cell membrane. The enzyme catalyses 8-methylmenaquinone-6 + succinate = 8-methylmenaquinol-6 + fumarate. Membrane anchor subunit of 8-methylmenaquinol:fumarate reductase (MFR), that catalyzes the reduction of fumarate using 8-methylmenaquinol-6 as electron donor. The complex shows no succinate oxidation activity. Is involved in anaerobic metabolism. SdhE likely contains the quinol/quinone binding site. This Wolinella succinogenes (strain ATCC 29543 / DSM 1740 / CCUG 13145 / JCM 31913 / LMG 7466 / NCTC 11488 / FDC 602W) (Vibrio succinogenes) protein is 8-methylmenaquinol:fumarate reductase membrane anchor subunit.